The chain runs to 182 residues: Spermatophorin SP23 (182 aa).

The N-terminal stretch at 1-7 (MVASIAG) is a signal peptide. Disordered regions lie at residues 1–26 (MVASIAGEEEPAAEKSQQSPDHFQPY), 56–79 (FQTIAKPNEGPTDQPEANSANSIE), and 104–136 (IVVNQAPPPPPVIYQAPPPPPPPPIFQQAPPTI). Positions 109–128 (APPPPPVIYQAPPPPPPPPI) are enriched in pro residues.

In terms of tissue distribution, spermatophore.

It is found in the secreted. Structural protein of a layer within the wall of the spermatophore produced probably by cell type 4 of the bean-shaped gland (BAG). Fixation in the spermatophore seems to require covalent cross-linking of spermatophorins. The protein is Spermatophorin SP23 (SP23) of Tenebrio molitor (Yellow mealworm beetle).